The following is a 164-amino-acid chain: ATP synthase subunit b (164 aa).

The helical transmembrane segment at 10 to 32 threads the bilayer; that stretch reads SAAMLMLFVLMVYFLNKFLYTPF.

The protein belongs to the ATPase B chain family. In terms of assembly, F-type ATPases have 2 components, F(1) - the catalytic core - and F(0) - the membrane proton channel. F(1) has five subunits: alpha(3), beta(3), gamma(1), delta(1), epsilon(1). F(0) has three main subunits: a(1), b(2) and c(10-14). The alpha and beta chains form an alternating ring which encloses part of the gamma chain. F(1) is attached to F(0) by a central stalk formed by the gamma and epsilon chains, while a peripheral stalk is formed by the delta and b chains.

It is found in the cell inner membrane. Its function is as follows. F(1)F(0) ATP synthase produces ATP from ADP in the presence of a proton or sodium gradient. F-type ATPases consist of two structural domains, F(1) containing the extramembraneous catalytic core and F(0) containing the membrane proton channel, linked together by a central stalk and a peripheral stalk. During catalysis, ATP synthesis in the catalytic domain of F(1) is coupled via a rotary mechanism of the central stalk subunits to proton translocation. Component of the F(0) channel, it forms part of the peripheral stalk, linking F(1) to F(0). This is ATP synthase subunit b from Thermotoga maritima (strain ATCC 43589 / DSM 3109 / JCM 10099 / NBRC 100826 / MSB8).